The chain runs to 380 residues: Cell division protein FtsZ (380 aa).

Residues 27–31, 119–121, E150, and N189 contribute to the GTP site; these read GAGNN and GTG.

This sequence belongs to the FtsZ family. In terms of assembly, homodimer. Polymerizes to form a dynamic ring structure in a strictly GTP-dependent manner. Interacts directly with several other division proteins.

The protein resides in the cytoplasm. Its function is as follows. Essential cell division protein that forms a contractile ring structure (Z ring) at the future cell division site. The regulation of the ring assembly controls the timing and the location of cell division. One of the functions of the FtsZ ring is to recruit other cell division proteins to the septum to produce a new cell wall between the dividing cells. Binds GTP and shows GTPase activity. This is Cell division protein FtsZ from Mycoplasma pneumoniae (strain ATCC 29342 / M129 / Subtype 1) (Mycoplasmoides pneumoniae).